The following is a 25-amino-acid chain: Kunitz-type serine protease inhibitor 2 (25 aa).

The BPTI/Kunitz inhibitor domain maps to 6-25 (VCELPKEVGGPCRGHIIPRY).

It localises to the secreted. Its function is as follows. Inhibits bovine trypsin, human plasma kallikrein and human neutrophil elastase. This is Kunitz-type serine protease inhibitor 2 from Rhipicephalus microplus (Cattle tick).